The sequence spans 687 residues: Glycine--tRNA ligase beta subunit (687 aa).

This sequence belongs to the class-II aminoacyl-tRNA synthetase family. In terms of assembly, tetramer of two alpha and two beta subunits.

The protein resides in the cytoplasm. It carries out the reaction tRNA(Gly) + glycine + ATP = glycyl-tRNA(Gly) + AMP + diphosphate. The chain is Glycine--tRNA ligase beta subunit from Neisseria meningitidis serogroup A / serotype 4A (strain DSM 15465 / Z2491).